Here is a 50-residue protein sequence, read N- to C-terminus: Kappa-actitoxin-Bcs4a (50 aa).

It belongs to the sea anemone type 5 potassium channel toxin family. Contains 4 disulfide bonds.

It is found in the secreted. Its subcellular location is the nematocyst. Functionally, inhibits voltage-gated potassium channels (Kv1/KCNA). Is potent on Drosophila Shaker IR channels (IC(50)=94.25 nM), and rKv1.2/KCNA2 (IC(50)=172.59 nM), and moderately active on hKv1.3/KCNA3 (IC(50)=1006.48 nM), rKv1.6/KCNA6 (IC(50)=2245.93 nM), and Kv1.1/KCNA1 (IC(50) around 3 uM). In vivo, induces a rapid increase in swimming speed on zebrafish larvae, as well as death which occurs between 2 and 18 hours later. Also paralyzes swimming crabs (C.danae) when injected at the junction between the body and the walking leg. The protein is Kappa-actitoxin-Bcs4a of Bunodosoma caissarum (Sea anemone).